The primary structure comprises 249 residues: Uridylate kinase (249 aa).

19–22 serves as a coordination point for ATP; the sequence is KLSG. Gly61 contacts UMP. ATP is bound by residues Gly62 and Arg66. UMP-binding positions include Asp81 and 142–149; that span reads TGNPYFTT. Residues Thr169, Tyr175, and Asp178 each coordinate ATP.

The protein belongs to the UMP kinase family. As to quaternary structure, homohexamer.

It localises to the cytoplasm. It catalyses the reaction UMP + ATP = UDP + ADP. The protein operates within pyrimidine metabolism; CTP biosynthesis via de novo pathway; UDP from UMP (UMPK route): step 1/1. With respect to regulation, inhibited by UTP. Its function is as follows. Catalyzes the reversible phosphorylation of UMP to UDP. The protein is Uridylate kinase of Anaeromyxobacter sp. (strain Fw109-5).